The following is a 332-amino-acid chain: Phosphoribulokinase (332 aa).

It belongs to the phosphoribulokinase family.

The catalysed reaction is D-ribulose 5-phosphate + ATP = D-ribulose 1,5-bisphosphate + ADP + H(+). It functions in the pathway carbohydrate biosynthesis; Calvin cycle. In Synechocystis sp. (strain ATCC 27184 / PCC 6803 / Kazusa), this protein is Phosphoribulokinase (prk).